Here is a 307-residue protein sequence, read N- to C-terminus: Aspartate carbamoyltransferase catalytic subunit (307 aa).

Carbamoyl phosphate is bound by residues Arg-56 and Thr-57. L-aspartate is bound at residue Lys-84. Residues Arg-106, His-136, and Gln-139 each coordinate carbamoyl phosphate. Arg-169 and Arg-221 together coordinate L-aspartate. Carbamoyl phosphate-binding residues include Ala-262 and Pro-263.

It belongs to the aspartate/ornithine carbamoyltransferase superfamily. ATCase family. Heterododecamer (2C3:3R2) of six catalytic PyrB chains organized as two trimers (C3), and six regulatory PyrI chains organized as three dimers (R2).

The catalysed reaction is carbamoyl phosphate + L-aspartate = N-carbamoyl-L-aspartate + phosphate + H(+). It functions in the pathway pyrimidine metabolism; UMP biosynthesis via de novo pathway; (S)-dihydroorotate from bicarbonate: step 2/3. In terms of biological role, catalyzes the condensation of carbamoyl phosphate and aspartate to form carbamoyl aspartate and inorganic phosphate, the committed step in the de novo pyrimidine nucleotide biosynthesis pathway. The polypeptide is Aspartate carbamoyltransferase catalytic subunit (Streptococcus pneumoniae (strain 70585)).